The chain runs to 299 residues: Protein N-terminal and lysine N-methyltransferase EFM7 (299 aa).

S-adenosyl-L-methionine-binding positions include Trp74, 100 to 102, Asp122, Trp155, and Ser178; that span reads GAG.

The protein belongs to the class I-like SAM-binding methyltransferase superfamily. EFM7 family.

Its subcellular location is the cytoplasm. S-adenosyl-L-methionine-dependent protein methyltransferase that trimethylates the N-terminal glycine 'Gly-2' of elongation factor 1-alpha, before also catalyzing the mono- and dimethylation of 'Lys-3'. This chain is Protein N-terminal and lysine N-methyltransferase EFM7, found in Cryptococcus neoformans var. neoformans serotype D (strain B-3501A) (Filobasidiella neoformans).